The primary structure comprises 512 residues: ETS translocation variant 3 (512 aa).

A DNA-binding region (ETS) is located at residues Ile35 to Asn116. The interval Val136–His222 is disordered. Residues Ser139, Ser159, and Ser315 each carry the phosphoserine modification. Positions His158 to Gly184 are enriched in polar residues. A disordered region spans residues Pro336–Ala512. 3 stretches are compositionally biased toward basic and acidic residues: residues Ile380 to Glu406, Asp453 to Ala468, and Arg479 to Lys491. A Glycyl lysine isopeptide (Lys-Gly) (interchain with G-Cter in SUMO2) cross-link involves residue Lys381. Lys388 is modified (N6-acetyllysine; alternate). Lys388 participates in a covalent cross-link: Glycyl lysine isopeptide (Lys-Gly) (interchain with G-Cter in SUMO2); alternate.

Belongs to the ETS family.

Its subcellular location is the nucleus. Functionally, transcriptional repressor that contribute to growth arrest during terminal macrophage differentiation by repressing target genes involved in Ras-dependent proliferation. Represses MMP1 promoter activity. This is ETS translocation variant 3 (ETV3) from Homo sapiens (Human).